The chain runs to 270 residues: S-methyl-5'-thioadenosine phosphorylase (270 aa).

Residues serine 16, 58–59 (RH), and 91–92 (SA) contribute to the phosphate site. Cystine bridges form between cysteine 138–cysteine 205, cysteine 200–cysteine 262, and cysteine 259–cysteine 261. Methionine 190 contributes to the substrate binding site. Threonine 191 is a phosphate binding site. 214 to 216 (DYD) is a substrate binding site.

Belongs to the PNP/MTAP phosphorylase family. MTAP subfamily. As to quaternary structure, homohexamer. Dimer of a homotrimer.

The catalysed reaction is S-methyl-5'-thioadenosine + phosphate = 5-(methylsulfanyl)-alpha-D-ribose 1-phosphate + adenine. Its pathway is amino-acid biosynthesis; L-methionine biosynthesis via salvage pathway; S-methyl-5-thio-alpha-D-ribose 1-phosphate from S-methyl-5'-thioadenosine (phosphorylase route): step 1/1. Its function is as follows. Catalyzes the reversible phosphorylation of S-methyl-5'-thioadenosine (MTA) to adenine and 5-methylthioribose-1-phosphate. Involved in the breakdown of MTA, a major by-product of polyamine biosynthesis. Responsible for the first step in the methionine salvage pathway after MTA has been generated from S-adenosylmethionine. Has broad substrate specificity with 6-aminopurine nucleosides as preferred substrates. This is S-methyl-5'-thioadenosine phosphorylase from Saccharolobus solfataricus (strain ATCC 35092 / DSM 1617 / JCM 11322 / P2) (Sulfolobus solfataricus).